An 844-amino-acid polypeptide reads, in one-letter code: MQDISNHTPMIQQYLKIKSQYQDILLFYRMGDFYELFFDDAKKAAELLDITLTARGKSNGESIPMAGVPYHAAEAYIAKIVKKGLSIAICEQTGDPNTSKGPVERQVTRIITPATVSEEAFLDNNQDSILVSIFEKNNKYYLAYTSYTQGKIYLVKTLTSLNELKNTVLKLSPQEIITNSRELAQQNPFKKPIKALEEWYYSNFEAKKYINDSLDTNIANNILNLYKNDQLTTIGSILSYLTNILKDTPRHITDISYEQEQDTLNIDINSRINLELDNNSKSSLLSIIGKCKTSLGSRLLKRYFSNPTRNLNILATRHSIINSLGENQHFLKIQDVLSYISDIERIISRVALGTVKPKDLVALRYSLEQLPILKKLLSEKNTPEITNINNRIHQLDELVTLLDKAIIENPPTTIRDGGVIKEGFDKELDELKSIKDNSYDFLIKFEELQKQKIGISTLKVGYNRVHGYYIELSKQHADKIPTEYVRRQTLKASERYITEELKNFEDKVLSSKEKALAREKLIYDTLLKKVIEYYKQIQETAASIAEIDVLANFAERAIKLKLSQPKFNNLAKLELKEVRHLAIEHNIDEPFIPNDTLLSKDTNTLQIITGPNMGGKSTYMRQVAQLIFLAYIGSFVPASYADICDIDTIYTRIGASDDISSGRSTFMVEMTETAYILNNASAKSLVIMDEIGRGTSTFDGLALAKACAEKFAQMGAFTLFATHYFELTELAKQYPNVCNIHFEAKEYKDNIYFMHKAVTGAAKKSYGIQVAKLAGISQDVLESAKQNLYNLEKKQQLTESTQVQAQFQLEPTTQNPLQQKLDAIDINTITPLEALNILFELKKR.

610-617 provides a ligand contact to ATP; the sequence is GPNMGGKS.

It belongs to the DNA mismatch repair MutS family.

Functionally, this protein is involved in the repair of mismatches in DNA. It is possible that it carries out the mismatch recognition step. This protein has a weak ATPase activity. The polypeptide is DNA mismatch repair protein MutS (Francisella tularensis subsp. holarctica (strain FTNF002-00 / FTA)).